We begin with the raw amino-acid sequence, 156 residues long: Small ribosomal subunit protein uS7 (156 aa).

The protein belongs to the universal ribosomal protein uS7 family. In terms of assembly, part of the 30S ribosomal subunit. Contacts proteins S9 and S11.

Its function is as follows. One of the primary rRNA binding proteins, it binds directly to 16S rRNA where it nucleates assembly of the head domain of the 30S subunit. Is located at the subunit interface close to the decoding center, probably blocks exit of the E-site tRNA. This chain is Small ribosomal subunit protein uS7, found in Thermobifida fusca (strain YX).